A 364-amino-acid polypeptide reads, in one-letter code: Aminomethyltransferase (364 aa).

The protein belongs to the GcvT family. The glycine cleavage system is composed of four proteins: P, T, L and H.

It carries out the reaction N(6)-[(R)-S(8)-aminomethyldihydrolipoyl]-L-lysyl-[protein] + (6S)-5,6,7,8-tetrahydrofolate = N(6)-[(R)-dihydrolipoyl]-L-lysyl-[protein] + (6R)-5,10-methylene-5,6,7,8-tetrahydrofolate + NH4(+). The glycine cleavage system catalyzes the degradation of glycine. In Salmonella paratyphi A (strain AKU_12601), this protein is Aminomethyltransferase.